The following is a 552-amino-acid chain: Low-affinity Fe(2+) transport protein (552 aa).

Over 1-97 (MGKIAEFLGN…DFLVRVAGSQ (97 aa)) the chain is Extracellular. Residue lysine 39 forms a Glycyl lysine isopeptide (Lys-Gly) (interchain with G-Cter in ubiquitin) linkage. 2 positions are modified to phosphoserine: serine 48 and serine 50. Residues 98 to 118 (AVFFIVWIILIIWVVIGIVYN) form a helical membrane-spanning segment. At 119–225 (APFNWQVVMQ…SNVASRYMGS (107 aa)) the chain is on the cytoplasmic side. Residues 226-246 (IAAMVIFWIGIFVWIGCGAIP) form a helical membrane-spanning segment. Residues 247–271 (KDAGNTPPYTGETTGSNPRLKKFSD) lie on the Extracellular side of the membrane. A helical transmembrane segment spans residues 272–292 (AWQMYINTAVAVSLLICTTFL). Over 293-354 (QNIRARHDYF…GRKMIDWYAD (62 aa)) the chain is Cytoplasmic. A helical transmembrane segment spans residues 355–375 (IIGTGIGVLIGVAVFATWIGI). At 376-383 (GSPMKWDD) the chain is on the extracellular side. A helical membrane pass occupies residues 384–404 (NWWLIIGTYTGLIGFLDGFVL). Topologically, residues 405 to 465 (REVYFRIVQH…SQYINRICST (61 aa)) are cytoplasmic. The helical transmembrane segment at 466 to 486 (PWSVLVSVIIIIGLICIASGL) threads the bilayer. The Extracellular segment spans residues 487–493 (RWSTTGQ). Residues 494-514 (LIANTPTMIIEEFFLLVLLQA) form a helical membrane-spanning segment. Topologically, residues 515–552 (HNWADRQRRVEVTALYARRRILLSYVEKRFPEVMMLEK) are cytoplasmic.

The protein belongs to the FET4 family.

Its subcellular location is the membrane. Required for Fe(2+) ion low affinity uptake. This is Low-affinity Fe(2+) transport protein (FET4) from Saccharomyces cerevisiae (strain ATCC 204508 / S288c) (Baker's yeast).